We begin with the raw amino-acid sequence, 294 residues long: Metallophosphoesterase MPPED2 (294 aa).

The Mn(2+) site is built by Asp65, His67, Asp86, Asn117, and His213. 117–118 provides a ligand contact to GMP; that stretch reads NH. GMP is bound by residues 225–226 and 254–255; these read KE and HE. Residue His254 coordinates Mn(2+).

Belongs to the UPF0046 family. As to quaternary structure, homodimer. The cofactor is Mn(2+). It depends on Co(2+) as a cofactor. As to expression, expressed in fetal brain (at protein level). detected in fetal and adult brain.

With respect to regulation, inhibited by nmolar levels of AMP and GMP. Functionally, displays low metallophosphoesterase activity (in vitro). May play a role in the development of the nervous system. The chain is Metallophosphoesterase MPPED2 (Mpped2) from Rattus norvegicus (Rat).